The sequence spans 86 residues: Large ribosomal subunit protein bL27 (86 aa).

The tract at residues 1–23 is disordered; the sequence is MAHKKAGGSTRNGRDSESKRLGV.

This sequence belongs to the bacterial ribosomal protein bL27 family.

This Alkalilimnicola ehrlichii (strain ATCC BAA-1101 / DSM 17681 / MLHE-1) protein is Large ribosomal subunit protein bL27.